We begin with the raw amino-acid sequence, 394 residues long: Cell division protein FtsZ (394 aa).

GTP is bound by residues 21–25 (GGGNN), Arg29, 108–110 (GTG), Glu139, Arg143, Asn166, and Asp187. Positions 317-394 (DKPSSQGRKA…EERRSRRTRR (78 aa)) are disordered. Composition is skewed to low complexity over residues 328 to 346 (STGFGSSVNSSSNHQSGAS) and 353 to 364 (SAHTSHSQSSES). The segment covering 365–388 (VSERSHTTKDDDIPSFIRNREERR) has biased composition (basic and acidic residues).

The protein belongs to the FtsZ family. As to quaternary structure, homodimer. Polymerizes to form a dynamic ring structure in a strictly GTP-dependent manner. Interacts directly with several other division proteins.

The protein resides in the cytoplasm. Essential cell division protein that forms a contractile ring structure (Z ring) at the future cell division site. The regulation of the ring assembly controls the timing and the location of cell division. One of the functions of the FtsZ ring is to recruit other cell division proteins to the septum to produce a new cell wall between the dividing cells. Binds GTP and shows GTPase activity. The polypeptide is Cell division protein FtsZ (Staphylococcus epidermidis (strain ATCC 35984 / DSM 28319 / BCRC 17069 / CCUG 31568 / BM 3577 / RP62A)).